The primary structure comprises 274 residues: Penicillin-insensitive murein endopeptidase (274 aa).

Residues 1 to 19 form the signal peptide; the sequence is MKKTAIALLAWFVSSASLA. Cystine bridges form between cysteine 44-cysteine 265, cysteine 187-cysteine 235, and cysteine 216-cysteine 223. Zn(2+) is bound by residues histidine 110, histidine 113, aspartate 120, aspartate 147, histidine 150, and histidine 211. The segment at 225-274 is disordered; that stretch reads DQPLPPPGDGCGAELQSWFEPPKPGTTKPEKKTPPPLPPSCQALLDEHVL.

The protein belongs to the peptidase M74 family. As to quaternary structure, dimer. Zn(2+) serves as cofactor.

It is found in the periplasm. Functionally, murein endopeptidase that cleaves the D-alanyl-meso-2,6-diamino-pimelyl amide bond that connects peptidoglycan strands. Likely plays a role in the removal of murein from the sacculus. The chain is Penicillin-insensitive murein endopeptidase from Salmonella agona (strain SL483).